The primary structure comprises 215 residues: Sec-independent protein translocase protein TatB (215 aa).

Residues 1–21 (MLDIGWTELVVIAIVLIIVVG) traverse the membrane as a helical segment. 2 disordered regions span residues 95–119 (DLQK…EPVN) and 138–215 (AVSS…KGDA). The segment covering 145–157 (QMDRAADVPKASE) has biased composition (basic and acidic residues). The segment covering 203–215 (SKTRAASRKKGDA) has biased composition (basic residues).

This sequence belongs to the TatB family. In terms of assembly, the Tat system comprises two distinct complexes: a TatABC complex, containing multiple copies of TatA, TatB and TatC subunits, and a separate TatA complex, containing only TatA subunits. Substrates initially bind to the TatABC complex, which probably triggers association of the separate TatA complex to form the active translocon.

The protein resides in the cell inner membrane. In terms of biological role, part of the twin-arginine translocation (Tat) system that transports large folded proteins containing a characteristic twin-arginine motif in their signal peptide across membranes. Together with TatC, TatB is part of a receptor directly interacting with Tat signal peptides. TatB may form an oligomeric binding site that transiently accommodates folded Tat precursor proteins before their translocation. In Rhizobium meliloti (strain 1021) (Ensifer meliloti), this protein is Sec-independent protein translocase protein TatB.